A 168-amino-acid chain; its full sequence is MACKSSCSLLLLAAVLLSVLAAASASGSCVPGVAFRTNLLPHCRDYVLQQTCGTFTPGSKLPEWMTSASIYSPGKPYLAKLYCCQELAEISQQCRCEALRYFIALPVPSQPVDPRSGNVGESGLIDLPGCPREMQWDFVRLLVAPGQCNLATIHNVRYCPAVEQPLWI.

A signal peptide spans 1 to 25; sequence MACKSSCSLLLLAAVLLSVLAAASA.

The protein belongs to the protease inhibitor I6 (cereal trypsin/alpha-amylase inhibitor) family. Subunit of the tetrameric inhibitor. Five disulfide bonds, which are essential for the inhibitor activity, are probably present. In terms of tissue distribution, developing endosperm.

Its subcellular location is the secreted. In terms of biological role, alpha-amylase/trypsin inhibitor. It could be involved in insect defense mechanisms. This is Alpha-amylase/trypsin inhibitor CM3 from Triticum aestivum (Wheat).